A 323-amino-acid chain; its full sequence is o-succinylbenzoate synthase (323 aa).

The Proton donor role is filled by Lys-134. Positions 162, 191, and 214 each coordinate Mg(2+). Residue Lys-236 is the Proton acceptor of the active site.

This sequence belongs to the mandelate racemase/muconate lactonizing enzyme family. MenC type 1 subfamily. Requires a divalent metal cation as cofactor.

It carries out the reaction (1R,6R)-6-hydroxy-2-succinyl-cyclohexa-2,4-diene-1-carboxylate = 2-succinylbenzoate + H2O. Its pathway is quinol/quinone metabolism; 1,4-dihydroxy-2-naphthoate biosynthesis; 1,4-dihydroxy-2-naphthoate from chorismate: step 4/7. The protein operates within quinol/quinone metabolism; menaquinone biosynthesis. Its function is as follows. Converts 2-succinyl-6-hydroxy-2,4-cyclohexadiene-1-carboxylate (SHCHC) to 2-succinylbenzoate (OSB). This chain is o-succinylbenzoate synthase, found in Proteus mirabilis (strain HI4320).